A 1181-amino-acid polypeptide reads, in one-letter code: WD repeat-containing protein 35 (1181 aa).

WD repeat units lie at residues 4–43, 61–100, 105–143, 147–185, 193–241, and 246–288; these read YLSK…VLKL, LSMN…VWML, WIEE…IVGS, NRIW…IYDN, MKLS…IMRH, and NPVL…IVQF.

Component of the IFT complex A (IFT-A) complex. IFT-A complex is divided into a core subcomplex composed of IFT122:IFT140:WDR19 which is associated with TULP3 and a peripheral subcomplex composed of IFT43:WDR35:TTC21B. Interacts directy with IFT122, ITF43 and TTC21B. Interacts with IFT43. Interacts with CFAP61.

It is found in the cytoplasm. The protein localises to the cytoskeleton. Its subcellular location is the microtubule organizing center. The protein resides in the centrosome. It localises to the cilium axoneme. It is found in the cilium basal body. Functionally, as a component of the IFT complex A (IFT-A), a complex required for retrograde ciliary transport and entry into cilia of G protein-coupled receptors (GPCRs), it is involved in ciliogenesis and ciliary protein trafficking. May promote CASP3 activation and TNF-stimulated apoptosis. The polypeptide is WD repeat-containing protein 35 (Homo sapiens (Human)).